Consider the following 227-residue polypeptide: Testis-expressed protein 30 (227 aa).

The protein is Testis-expressed protein 30 (TEX30) of Homo sapiens (Human).